Here is a 359-residue protein sequence, read N- to C-terminus: Peptide chain release factor 1 (359 aa).

An N5-methylglutamine modification is found at Gln236.

Belongs to the prokaryotic/mitochondrial release factor family. Post-translationally, methylated by PrmC. Methylation increases the termination efficiency of RF1.

It localises to the cytoplasm. In terms of biological role, peptide chain release factor 1 directs the termination of translation in response to the peptide chain termination codons UAG and UAA. This is Peptide chain release factor 1 from Streptococcus agalactiae serotype V (strain ATCC BAA-611 / 2603 V/R).